Reading from the N-terminus, the 264-residue chain is Thymidylate synthase 2 (264 aa).

Position 21 (arginine 21) interacts with dUMP. Histidine 51 is a (6R)-5,10-methylene-5,6,7,8-tetrahydrofolate binding site. 126 to 127 contacts dUMP; that stretch reads RR. Cysteine 146 functions as the Nucleophile in the catalytic mechanism. Residues 166–169, asparagine 177, and 207–209 each bind dUMP; these read RSAD and HIY. A (6R)-5,10-methylene-5,6,7,8-tetrahydrofolate-binding site is contributed by aspartate 169. Serine 263 contacts (6R)-5,10-methylene-5,6,7,8-tetrahydrofolate.

This sequence belongs to the thymidylate synthase family. Bacterial-type ThyA subfamily. In terms of assembly, homodimer.

The protein localises to the cytoplasm. It catalyses the reaction dUMP + (6R)-5,10-methylene-5,6,7,8-tetrahydrofolate = 7,8-dihydrofolate + dTMP. The protein operates within pyrimidine metabolism; dTTP biosynthesis. In terms of biological role, catalyzes the reductive methylation of 2'-deoxyuridine-5'-monophosphate (dUMP) to 2'-deoxythymidine-5'-monophosphate (dTMP) while utilizing 5,10-methylenetetrahydrofolate (mTHF) as the methyl donor and reductant in the reaction, yielding dihydrofolate (DHF) as a by-product. This enzymatic reaction provides an intracellular de novo source of dTMP, an essential precursor for DNA biosynthesis. The polypeptide is Thymidylate synthase 2 (Bacillus subtilis (strain 168)).